The chain runs to 242 residues: uncharacterized protein (242 aa).

Transmembrane regions (helical) follow at residues 75–95 (YAIFHIFLPFILTLLLYHNFY), 116–136 (IVLIFTYVMTVIIVYFSFSLI), and 176–196 (IQGLAHIILSLLLFILGLEVI). Residues 204–242 (DVEMSSMRGQAITTEPASDNTMAEGTDCNTSKDVESGSS) form a disordered region. Polar residues predominate over residues 210–232 (MRGQAITTEPASDNTMAEGTDCN). Residues 233–242 (TSKDVESGSS) are compositionally biased toward basic and acidic residues.

It localises to the cytoplasm. It is found in the membrane. This is an uncharacterized protein from Schizosaccharomyces pombe (strain 972 / ATCC 24843) (Fission yeast).